A 353-amino-acid chain; its full sequence is Guanine nucleotide-binding protein alpha-1 subunit (353 aa).

Residues 1-26 (MGCGMSTEEKEGKARNEEIENQLKRD) are disordered. The N-myristoyl glycine moiety is linked to residue glycine 2. Cysteine 3 carries S-palmitoyl cysteine lipidation. The segment covering 7 to 26 (TEEKEGKARNEEIENQLKRD) has biased composition (basic and acidic residues). The region spanning 32–353 (NEIKMLLLGA…QENLRLCGLI (322 aa)) is the G-alpha domain. The tract at residues 35 to 48 (KMLLLGAGESGKST) is G1 motif. Residues glutamate 43, serine 44, glycine 45, lysine 46, serine 47, threonine 48, aspartate 150, leucine 175, threonine 181, glycine 203, asparagine 269, lysine 270, aspartate 272, and alanine 325 each contribute to the GTP site. Serine 47 contributes to the Mg(2+) binding site. Residues 173-181 (DVLRSRVKT) are G2 motif. Threonine 181 provides a ligand contact to Mg(2+). Positions 196–205 (YRMFDVGGQR) are G3 motif. Residues 265-272 (ILFLNKID) are G4 motif. The tract at residues 323–328 (TCATDT) is G5 motif.

It belongs to the G-alpha family. G(q) subfamily. In terms of assembly, g proteins are composed of 3 units; alpha, beta and gamma. The alpha chain contains the guanine nucleotide binding site. Mg(2+) is required as a cofactor.

Its function is as follows. Guanine nucleotide-binding proteins (G proteins) are involved as modulators or transducers in various transmembrane signaling systems. The polypeptide is Guanine nucleotide-binding protein alpha-1 subunit (gna-1) (Neurospora crassa (strain ATCC 24698 / 74-OR23-1A / CBS 708.71 / DSM 1257 / FGSC 987)).